The primary structure comprises 494 residues: UPF0371 protein SpyM3_1021 (494 aa).

This sequence belongs to the UPF0371 family.

In Streptococcus pyogenes serotype M3 (strain ATCC BAA-595 / MGAS315), this protein is UPF0371 protein SpyM3_1021.